Here is a 223-residue protein sequence, read N- to C-terminus: MGKNEEVKLLGIWASPFSRRIEMALKLKGVPYEYLEEDLENKSSLLLALSPIHKKIPVLVHNGKTIIESHVILEYIDETWKHNPILPQDPFQRSKARVLAKLVDEKIVNVGFASLAKTEKGREVLIEQTRELIMCLEKELAGKDYFGGKTVGFLDFVAGSMIPFCLERAWEGMGVEMITEKKFPEYNKWVKKLKEVEIVVDCIPLREKHIEHMNNMAEKIRSA.

The GST N-terminal domain occupies glutamate 5–proline 84. Glutathione is bound by residues serine 15 to proline 16, asparagine 41 to lysine 42, lysine 55 to isoleucine 56, and glutamate 68 to serine 69. The GST C-terminal domain maps to aspartate 89 to methionine 216. Threonine 150 is subject to Phosphothreonine.

The protein belongs to the GST superfamily. Tau family.

Its subcellular location is the cytoplasm. The protein localises to the cytosol. The enzyme catalyses RX + glutathione = an S-substituted glutathione + a halide anion + H(+). May be involved in the conjugation of reduced glutathione to a wide number of exogenous and endogenous hydrophobic electrophiles and have a detoxification role against certain herbicides. This Arabidopsis thaliana (Mouse-ear cress) protein is Glutathione S-transferase U6 (GSTU6).